A 571-amino-acid chain; its full sequence is Polypeptide N-acetylgalactosaminyltransferase 2 (571 aa).

The Cytoplasmic segment spans residues 1–6 (MRRRSR). Residues 7-24 (MLLCFAFLWVLGIAYYMY) form a helical; Signal-anchor for type II membrane protein membrane-spanning segment. Residues 25-571 (SGGGSALAGG…QWKFTLNLQQ (547 aa)) lie on the Lumenal side of the membrane. Serine 29 carries an O-linked (Xyl...) (chondroitin sulfate) serine glycan. Residues 53–66 (KKDLHHSNGEEKAQ) show a composition bias toward basic and acidic residues. The tract at residues 53–74 (KKDLHHSNGEEKAQSMETLPPG) is disordered. Cystine bridges form between cysteine 126–cysteine 354, cysteine 345–cysteine 423, cysteine 456–cysteine 473, and cysteine 496–cysteine 513. Positions 135–240 (LPATSVVITF…EHWLEPLLER (106 aa)) are catalytic subdomain A. Threonine 143, aspartate 176, and arginine 201 together coordinate substrate. Aspartate 224 serves as a coordination point for Mn(2+). Serine 225 serves as a coordination point for substrate. Histidine 226 is a Mn(2+) binding site. Residues 300-362 (PIKTPMIAGG…PCSRVGHVFR (63 aa)) are catalytic subdomain B. Tryptophan 331 is a substrate binding site. Histidine 359 is a Mn(2+) binding site. Substrate is bound by residues arginine 362, histidine 365, and tyrosine 367. Residues 443–566 (QDIAFGALQQ…PALSQQWKFT (124 aa)) form the Ricin B-type lectin domain. The residue at position 536 (serine 536) is a Phosphoserine. Cysteine 539 and cysteine 555 are joined by a disulfide.

The protein belongs to the glycosyltransferase 2 family. GalNAc-T subfamily. Mn(2+) serves as cofactor. In terms of tissue distribution, detected in urine (at protein level). Widely expressed.

It localises to the golgi apparatus. The protein resides in the golgi stack membrane. Its subcellular location is the secreted. It catalyses the reaction L-seryl-[protein] + UDP-N-acetyl-alpha-D-galactosamine = a 3-O-[N-acetyl-alpha-D-galactosaminyl]-L-seryl-[protein] + UDP + H(+). It carries out the reaction L-threonyl-[protein] + UDP-N-acetyl-alpha-D-galactosamine = a 3-O-[N-acetyl-alpha-D-galactosaminyl]-L-threonyl-[protein] + UDP + H(+). The protein operates within protein modification; protein glycosylation. Functionally, catalyzes the initial reaction in O-linked oligosaccharide biosynthesis, the transfer of an N-acetyl-D-galactosamine residue to a serine or threonine residue on the protein receptor. Has a broad spectrum of substrates for peptides such as EA2, Muc5AC, Muc1a, Muc1b. Probably involved in O-linked glycosylation of the immunoglobulin A1 (IgA1) hinge region. Involved in O-linked glycosylation of APOC-III, ANGPTL3 and PLTP. It participates in the regulation of HDL-C metabolism. This chain is Polypeptide N-acetylgalactosaminyltransferase 2 (GALNT2), found in Homo sapiens (Human).